The chain runs to 751 residues: Cytosolic neutral trehalase (751 aa).

The span at 1–10 shows a compositional bias: polar residues; sequence MSQVNTSQGP. Residues 1 to 59 form a disordered region; the sequence is MSQVNTSQGPVAQGRQRRLSSLSEFNDPFSNAEVYYGPPTDPRKQKQAKPAKINRTRTM. Position 2 is an N-acetylserine (Ser-2). A phosphoserine; by PKA mark is found at Ser-20 and Ser-21. Phosphoserine is present on Ser-23. Over residues 45–55 the composition is skewed to basic residues; it reads QKQAKPAKINR. Thr-58 carries the post-translational modification Phosphothreonine. Ser-60 bears the Phosphoserine; by PKA mark. At Ser-66 the chain carries Phosphoserine. Residues 73–92 form a disordered region; that stretch reads FGKLQQTRRGSEDDTYSSSQ. At Ser-83 the chain carries Phosphoserine; by PKA. Ca(2+) contacts are provided by Asp-114, Asp-116, Asn-118, Gln-120, and Asp-125. Residues Arg-302, 309 to 310, Asn-346, 355 to 357, Glu-424, Arg-473, and Gly-476 each bind substrate; these read WD and RSQ. Residues Asp-478 and Glu-674 each act as proton donor/acceptor in the active site.

Belongs to the glycosyl hydrolase 37 family. In terms of assembly, monomer. Interacts with BMH1 dimers; the interaction is direct and activates NTH1. Interacts with BMH2. The cofactor is Ca(2+). Post-translationally, phosphorylated by protein kinase A (PKA); phosphorylation at Ser-60 and Ser-83 is required for activation by the 14-3-3 proteins BMH1 and BMH2.

The protein localises to the cytoplasm. The catalysed reaction is alpha,alpha-trehalose + H2O = alpha-D-glucose + beta-D-glucose. It participates in carbohydrate degradation. Activated by calcium. Activated by protein kinase A (PKA)-mediated phosphorylation. In terms of biological role, hydrolyzes intracellular trehalose to glucose. The disaccharide trehalose serves as a storage carbohydrate that is mobilized during nutrient stress. Regulates the level of trehalose as a protectant for cell integrity during heat stress. The protein is Cytosolic neutral trehalase of Saccharomyces cerevisiae (strain ATCC 204508 / S288c) (Baker's yeast).